The following is a 723-amino-acid chain: Catalase-peroxidase (723 aa).

Residues W98–Y226 constitute a cross-link (tryptophyl-tyrosyl-methioninium (Trp-Tyr) (with M-252)). The active-site Proton acceptor is the H99. Positions Y226 to M252 form a cross-link, tryptophyl-tyrosyl-methioninium (Tyr-Met) (with W-98). A heme b-binding site is contributed by H267.

This sequence belongs to the peroxidase family. Peroxidase/catalase subfamily. Homodimer or homotetramer. The cofactor is heme b. In terms of processing, formation of the three residue Trp-Tyr-Met cross-link is important for the catalase, but not the peroxidase activity of the enzyme.

It carries out the reaction H2O2 + AH2 = A + 2 H2O. The enzyme catalyses 2 H2O2 = O2 + 2 H2O. In terms of biological role, bifunctional enzyme with both catalase and broad-spectrum peroxidase activity. This Vibrio vulnificus (strain YJ016) protein is Catalase-peroxidase.